The sequence spans 416 residues: Serine hydroxymethyltransferase (416 aa).

(6S)-5,6,7,8-tetrahydrofolate is bound by residues L121 and G125 to L127. K229 is modified (N6-(pyridoxal phosphate)lysine).

Belongs to the SHMT family. As to quaternary structure, homodimer. Pyridoxal 5'-phosphate is required as a cofactor.

Its subcellular location is the cytoplasm. The catalysed reaction is (6R)-5,10-methylene-5,6,7,8-tetrahydrofolate + glycine + H2O = (6S)-5,6,7,8-tetrahydrofolate + L-serine. It functions in the pathway one-carbon metabolism; tetrahydrofolate interconversion. The protein operates within amino-acid biosynthesis; glycine biosynthesis; glycine from L-serine: step 1/1. Functionally, catalyzes the reversible interconversion of serine and glycine with tetrahydrofolate (THF) serving as the one-carbon carrier. This reaction serves as the major source of one-carbon groups required for the biosynthesis of purines, thymidylate, methionine, and other important biomolecules. Also exhibits THF-independent aldolase activity toward beta-hydroxyamino acids, producing glycine and aldehydes, via a retro-aldol mechanism. In Neisseria meningitidis serogroup C / serotype 2a (strain ATCC 700532 / DSM 15464 / FAM18), this protein is Serine hydroxymethyltransferase.